Reading from the N-terminus, the 143-residue chain is Transcriptional regulator MraZ (143 aa).

SpoVT-AbrB domains lie at 5-47 (EYQH…PLTE) and 76-119 (AMEG…AKER).

This sequence belongs to the MraZ family. In terms of assembly, forms oligomers.

Its subcellular location is the cytoplasm. The protein resides in the nucleoid. The protein is Transcriptional regulator MraZ of Lactobacillus delbrueckii subsp. bulgaricus (strain ATCC 11842 / DSM 20081 / BCRC 10696 / JCM 1002 / NBRC 13953 / NCIMB 11778 / NCTC 12712 / WDCM 00102 / Lb 14).